Reading from the N-terminus, the 130-residue chain is MSMKIKICIPTERIQNPIISETIVETGILLNIMVANIDSTYGELIADVKDSRFARIKKALESRGAIVAILDRPIHRDEEECVECGACISVCPMNVYSFDETWSLCVDEKKCIQCGMCIKMCPHGALKLGE.

2 consecutive 4Fe-4S ferredoxin-type domains span residues 72 to 101 (RPIHRDEEECVECGACISVCPMNVYSFDET) and 102 to 130 (WSLCVDEKKCIQCGMCIKMCPHGALKLGE). [4Fe-4S] cluster is bound by residues Cys-81, Cys-84, Cys-87, Cys-91, Cys-111, Cys-114, Cys-117, and Cys-121.

As to quaternary structure, may form a complex with MA_1821. [4Fe-4S] cluster serves as cofactor.

It functions in the pathway amino-acid biosynthesis. Its function is as follows. Required for O-acetylhomoserine sulfhydrylase (OAHS)-independent homocysteine (Hcy) biosynthesis. Together with MA_1821, catalyzes the condensation of sulfide with aspartate semialdehyde to generate homocysteine. May be involved in the reduction of the disulfide formed in MA_1821. The chain is L-aspartate semialdehyde sulfurtransferase iron-sulfur subunit from Methanosarcina acetivorans (strain ATCC 35395 / DSM 2834 / JCM 12185 / C2A).